The sequence spans 113 residues: U11-theraphotoxin-Hhn1a (113 aa).

Residues 1 to 21 (MNTVRVTFLLVFVLAVSLGQA) form the signal peptide. Residues 22-74 (DKDENRMEMQEKTEQGKGYLDFAENLLPQKLEELEAKLLEEDSEESRNSRQKR) constitute a propeptide that is removed on maturation. Basic and acidic residues predominate over residues 59–69 (LLEEDSEESRN). The disordered stretch occupies residues 59–83 (LLEEDSEESRNSRQKRCIGEGVPCD). Disulfide bonds link Cys-75-Cys-90, Cys-82-Cys-95, and Cys-89-Cys-110.

Belongs to the neurotoxin 14 (magi-1) family. 01 (HNTX-16) subfamily. Expressed by the venom gland.

It is found in the secreted. In terms of biological role, probable ion channel inhibitor. In Cyriopagopus hainanus (Chinese bird spider), this protein is U11-theraphotoxin-Hhn1a.